The primary structure comprises 1388 residues: ESX-5 secretion system protein EccC5 (1388 aa).

The next 2 helical transmembrane spans lie at 38 to 58 (WLIV…AMVF) and 65 to 85 (FGGV…MMMF). 3 consecutive FtsK domains span residues 477-679 (GELL…GAAQ), 855-1049 (QPPW…EDAK), and 1158-1351 (LQPV…DPDE). ATP contacts are provided by residues 500-507 (GTTGSGKS), 873-880 (GAGGSGKT), and 1175-1182 (GRRECGRT).

In terms of assembly, part of the ESX-5 / type VII secretion system (T7SS), which is composed of cytosolic and membrane components. The ESX-5 membrane complex is composed of EccB5, EccC5, EccD5 and EccE5.

The protein localises to the cell inner membrane. Part of the ESX-5 specialized secretion system, which is responsible for the secretion of EsxN and a number of PE_PGRS and PPE proteins. This component is essential for ESX-5 complex stability and secretion. This Mycobacterium marinum (strain ATCC BAA-535 / M) protein is ESX-5 secretion system protein EccC5.